Reading from the N-terminus, the 1290-residue chain is Sorbin and SH3 domain-containing protein 1 (1290 aa).

Disordered regions lie at residues 1–211 (MSSE…LSDV), 238–271 (HKLN…SKSE), and 286–313 (TLPL…KKVD). A compositionally biased stretch (low complexity) spans 45-61 (SSSYRGTPSSSPVSPQE). Threonine 51 is subject to Phosphothreonine. Phosphoserine occurs at positions 55, 58, and 62. The segment covering 62-71 (SPKHESKSGL) has biased composition (basic and acidic residues). 2 stretches are compositionally biased toward polar residues: residues 83 to 95 (LSSS…NAQP) and 123 to 153 (EVSS…TIVN). A compositionally biased stretch (basic and acidic residues) spans 161-173 (HNRDPASERRAGE). Phosphoserine occurs at positions 164 and 175. Threonine 179 carries the phosphothreonine modification. A phosphoserine mark is found at serine 185, alanine 194, serine 204, serine 209, serine 254, serine 261, serine 270, and proline 288. A compositionally biased stretch (basic and acidic residues) spans 189–199 (ASERRAKDASR). Residues 202-247 (VRSAQDLSDVSTDEVGIPLRNTERSKDWYKTMFKQIHKLNRDDDSD) form the SoHo domain. Residues 240–260 (LNRDDDSDVHSPRYSFSDDTK) show a composition bias toward basic and acidic residues. The segment covering 299 to 313 (SPERNDWEPLDKKVD) has biased composition (basic and acidic residues). Position 325 is a phosphotyrosine; by ABL1 (tyrosine 325). Serine 345, proline 346, tyrosine 357, serine 376, and serine 407 each carry phosphoserine. The disordered stretch occupies residues 389 to 416 (VETVNKSPSANSPQSSAVSPTPDITSEP). The segment covering 392–412 (VNKSPSANSPQSSAVSPTPDI) has biased composition (polar residues). Tyrosine 421 carries the post-translational modification Phosphotyrosine; by ABL1. Phosphoserine occurs at positions 432 and 470. Disordered stretches follow at residues 463 to 482 (LSGL…RKGG), 588 to 607 (YDSK…SSRR), 697 to 739 (SLDF…EMDG), 783 to 803 (VSND…PKHR), 822 to 841 (RKHE…SRGD), and 862 to 972 (PLQQ…SPRH). Threonine 475 carries the post-translational modification Phosphothreonine. Polar residues-rich tracts occupy residues 595–606 (TMSLQEYGTSSR) and 704–722 (LSKS…SARS). Residue serine 969 is modified to Phosphoserine. SH3 domains lie at 1049–1108 (LEMR…LLPP) and 1123–1184 (LEYG…VLKR). Threonine 1189 carries the post-translational modification Phosphothreonine. Phosphotyrosine is present on residues tyrosine 1193 and tyrosine 1198. A compositionally biased stretch (low complexity) spans 1198 to 1210 (YSSSPSRSATVSP). Positions 1198–1227 (YSSSPSRSATVSPQQPQAQQRRVTPDRSQP) are disordered. Serine 1201 and serine 1209 each carry phosphoserine. The span at 1211-1227 (QQPQAQQRRVTPDRSQP) shows a compositional bias: polar residues. An SH3 3 domain is found at 1229–1290 (LDLCSYQALY…PGNYVKPLYL (62 aa)). Position 1238 is a phosphotyrosine; by ABL1 (tyrosine 1238).

Interacts (via SH3 domain 2) with PXN. Interacts with the long isoform of AFDN and with VCL. AFDN and VCL bind to SORBS1 in a competitive manner and do not form a ternary complex. Interacts with ABL1, CBL, CBLB and INPPL1/SHIP2 through the third SH3 domain. Interaction with ABL1 occurs only after insulin stimulation while this has no effect on the interaction with INPPL1. Interacts with the insulin receptor but dissociates from it following insulin stimulation. Also interacts with SCA7, PTK2/FAK1 and flotillin. Interacts (via third SH3 domain) with the Ten-1 ICD form of TENM1; the interaction induces the translocation of SORBS1 to the nucleus. Interacts with INSM1. Post-translationally, O-glycosylated. Expressed in all tissues tested: heart, brain, spleen, lung, liver, muscle, kidney and testis. Expressed in 3T3-L1 adipocytes but not in 3T3-L1 fibroblasts.

The protein localises to the cell junction. The protein resides in the adherens junction. It localises to the cell membrane. It is found in the cytoplasm. Its subcellular location is the cytoskeleton. The protein localises to the focal adhesion. The protein resides in the nucleus. It localises to the nucleus matrix. In terms of biological role, plays a role in tyrosine phosphorylation of CBL by linking CBL to the insulin receptor. Required for insulin-stimulated glucose transport. Involved in formation of actin stress fibers and focal adhesions. In Mus musculus (Mouse), this protein is Sorbin and SH3 domain-containing protein 1.